Consider the following 341-residue polypeptide: Guanine nucleotide-binding protein subunit beta (341 aa).

WD repeat units lie at residues G54–D84, L96–S126, G142–D171, G183–D213, G225–D255, N269–D299, and G311–N341.

The protein belongs to the WD repeat G protein beta family. As to quaternary structure, g proteins are composed of 3 units, alpha, beta and gamma.

Functionally, guanine nucleotide-binding proteins (G proteins) are involved as a modulator or transducer in various transmembrane signaling systems. The beta and gamma chains are required for the GTPase activity, for replacement of GDP by GTP, and for G protein-effector interaction. This Lymnaea stagnalis (Great pond snail) protein is Guanine nucleotide-binding protein subunit beta.